The chain runs to 109 residues: Large ribosomal subunit protein uL22 (109 aa).

It belongs to the universal ribosomal protein uL22 family. As to quaternary structure, part of the 50S ribosomal subunit.

This protein binds specifically to 23S rRNA; its binding is stimulated by other ribosomal proteins, e.g. L4, L17, and L20. It is important during the early stages of 50S assembly. It makes multiple contacts with different domains of the 23S rRNA in the assembled 50S subunit and ribosome. Its function is as follows. The globular domain of the protein is located near the polypeptide exit tunnel on the outside of the subunit, while an extended beta-hairpin is found that lines the wall of the exit tunnel in the center of the 70S ribosome. This Leptothrix cholodnii (strain ATCC 51168 / LMG 8142 / SP-6) (Leptothrix discophora (strain SP-6)) protein is Large ribosomal subunit protein uL22.